The chain runs to 355 residues: Isocitrate dehydrogenase [NAD] subunit gamma, mitochondrial (355 aa).

Isoleucine 1 is a transit peptide (mitochondrion). Positions 82 and 95 each coordinate citrate. The substrate site is built by arginine 98, arginine 129, and aspartate 216. Position 216 (aspartate 216) interacts with Mn(2+). Residues asparagine 274, threonine 275, and asparagine 286 each contribute to the ADP site.

This sequence belongs to the isocitrate and isopropylmalate dehydrogenases family. Heterooligomer of subunits alpha (IDH3A), beta (IDH3B), and gamma (IDH3G) in the apparent ratio of 2:1:1. The heterodimer containing one IDH3A and one IDH3B subunit and the heterodimer containing one IDH3A and one IDH3G subunit assemble into a heterotetramer (which contains two subunits of IDH3A, one of IDH3B and one of IDH3G) and further into the heterooctamer. Mg(2+) serves as cofactor. Mn(2+) is required as a cofactor.

It is found in the mitochondrion. The heterotetramer and the heterodimer composed of IDH3A and IDH3G subunits can be allosterically activated by citrate (CIT) or/and ADP, and the two activators can act independently or synergistically. The heterodimer composed of IDH3A and IDH3B subunits cannot be allosterically regulated and the allosteric regulation of the heterotetramer is through the IDH3G subunit and not the IDH3B subunit. The IDH3G subunit contains the allosteric site which consists of a CIT-binding site and an ADP-binding site, and the binding of CIT and ADP causes conformational changes at the allosteric site which are transmitted to the active site in the catalytic subunit (IDH3A) through a cascade of conformational changes at the heterodimer interface, leading to stabilization of the isocitrate-binding at the active site and thus activation of the enzyme. ATP can activate the heterotetramer and the heterodimer composed of IDH3A and IDH3G subunits at low concentrations but inhibits their activities at high concentrations, whereas ATP exhibits only inhibitory effect on the heterodimer composed of IDH3A and IDH3B subunits. Its function is as follows. Regulatory subunit which plays a role in the allosteric regulation of the enzyme catalyzing the decarboxylation of isocitrate (ICT) into alpha-ketoglutarate. The heterodimer composed of the alpha (IDH3A) and beta (IDH3B) subunits and the heterodimer composed of the alpha (IDH3A) and gamma (IDH3G) subunits, have considerable basal activity but the full activity of the heterotetramer (containing two subunits of IDH3A, one of IDH3B and one of IDH3G) requires the assembly and cooperative function of both heterodimers. In Macaca fascicularis (Crab-eating macaque), this protein is Isocitrate dehydrogenase [NAD] subunit gamma, mitochondrial (IDH3G).